The following is a 567-amino-acid chain: Dihydroxy-acid dehydratase 3 (567 aa).

Residue cysteine 57 participates in [2Fe-2S] cluster binding. Mg(2+) is bound at residue aspartate 89. Cysteine 130 contributes to the [2Fe-2S] cluster binding site. The Mg(2+) site is built by aspartate 131 and lysine 132. Position 132 is an N6-carboxylysine (lysine 132). Position 202 (cysteine 202) interacts with [2Fe-2S] cluster. Glutamate 454 is a binding site for Mg(2+). Residue serine 480 is the Proton acceptor of the active site.

The protein belongs to the IlvD/Edd family. Homodimer. It depends on [2Fe-2S] cluster as a cofactor. Requires Mg(2+) as cofactor.

The enzyme catalyses (2R)-2,3-dihydroxy-3-methylbutanoate = 3-methyl-2-oxobutanoate + H2O. The catalysed reaction is (2R,3R)-2,3-dihydroxy-3-methylpentanoate = (S)-3-methyl-2-oxopentanoate + H2O. The protein operates within amino-acid biosynthesis; L-isoleucine biosynthesis; L-isoleucine from 2-oxobutanoate: step 3/4. It participates in amino-acid biosynthesis; L-valine biosynthesis; L-valine from pyruvate: step 3/4. In terms of biological role, functions in the biosynthesis of branched-chain amino acids. Catalyzes the dehydration of (2R,3R)-2,3-dihydroxy-3-methylpentanoate (2,3-dihydroxy-3-methylvalerate) into 2-oxo-3-methylpentanoate (2-oxo-3-methylvalerate) and of (2R)-2,3-dihydroxy-3-methylbutanoate (2,3-dihydroxyisovalerate) into 2-oxo-3-methylbutanoate (2-oxoisovalerate), the penultimate precursor to L-isoleucine and L-valine, respectively. This is Dihydroxy-acid dehydratase 3 from Aromatoleum aromaticum (strain DSM 19018 / LMG 30748 / EbN1) (Azoarcus sp. (strain EbN1)).